The primary structure comprises 142 residues: Maximins y/H11 (142 aa).

The N-terminal stretch at 1–18 (MNFKYIVAVSFLITSGYA) is a signal peptide. A propeptide spanning residues 19-43 (ESVKNDEQSLSQRDVLEEESLREIR) is cleaved from the precursor. A Phenylalanine amide modification is found at phenylalanine 68. A propeptide spanning residues 72-121 (SAEDHEVMKRLEAVIRDLDSLDHPEEASERETRGFNQEEIANLFTKKEKR) is cleaved from the precursor. Isoleucine 141 is modified (isoleucine amide).

It belongs to the bombinin family. In terms of tissue distribution, expressed by the skin glands.

It localises to the secreted. Its function is as follows. Maximin-y shows antimicrobial activity against bacteria and against the fungus C.albicans. It has little hemolytic activity. In terms of biological role, maximin-H11 shows antimicrobial activity against bacteria and against the fungus C.albicans. Shows strong hemolytic activity. The polypeptide is Maximins y/H11 (Bombina maxima (Giant fire-bellied toad)).